The primary structure comprises 458 residues: Argininosuccinate lyase (458 aa).

This sequence belongs to the lyase 1 family. Argininosuccinate lyase subfamily.

The protein localises to the cytoplasm. It catalyses the reaction 2-(N(omega)-L-arginino)succinate = fumarate + L-arginine. It participates in amino-acid biosynthesis; L-arginine biosynthesis; L-arginine from L-ornithine and carbamoyl phosphate: step 3/3. In Heliobacterium mobile (Heliobacillus mobilis), this protein is Argininosuccinate lyase.